Reading from the N-terminus, the 711-residue chain is Long-chain-fatty-acid--CoA ligase 4 (711 aa).

Residues 8-28 form a helical; Signal-anchor for type III membrane protein membrane-spanning segment; sequence LTIILLPVHLLITIYSALIFI. Residues 29–711 are Cytoplasmic-facing; it reads PWYFLTNAKK…KDIERMYGGK (683 aa). The residue at position 447 (Ser-447) is a Phosphoserine.

The protein belongs to the ATP-dependent AMP-binding enzyme family. It depends on Mg(2+) as a cofactor. Abundant in steroidogenic tissues, also found in the kidney, brain and liver.

The protein resides in the mitochondrion outer membrane. The protein localises to the peroxisome membrane. Its subcellular location is the microsome membrane. It localises to the endoplasmic reticulum membrane. It is found in the cell membrane. The enzyme catalyses a long-chain fatty acid + ATP + CoA = a long-chain fatty acyl-CoA + AMP + diphosphate. It catalyses the reaction (5Z,8Z,11Z,14Z)-eicosatetraenoate + ATP + CoA = (5Z,8Z,11Z,14Z)-eicosatetraenoyl-CoA + AMP + diphosphate. It carries out the reaction 15-hydroxy-(5Z,8Z,11Z,13E)-eicosatetraenoate + ATP + CoA = 15-hydroxy-(5Z,8Z,11Z,13E)-eicosatetraenoyl-CoA + AMP + diphosphate. The catalysed reaction is 12-hydroxy-(5Z,8Z,10E,14Z)-eicosatetraenoate + ATP + CoA = 12-hydroxy-(5Z,8Z,10E,14Z)-eicosatetraenoyl-CoA + AMP + diphosphate. The enzyme catalyses 5-hydroxy-(6E,8Z,11Z,14Z)-eicosatetraenoate + ATP + CoA = 5-hydroxy-(6E,8Z,11Z,14Z)-eicosatetraenoyl-CoA + AMP + diphosphate. It catalyses the reaction 5,6-epoxy-(8Z,11Z,14Z)-eicosatrienoate + ATP + CoA = 5,6-epoxy-(8Z,11Z,14Z)-eicosatrienoyl-CoA + AMP + diphosphate. It carries out the reaction 14,15-epoxy-(5Z,8Z,11Z)-eicosatrienoate + ATP + CoA = 14,15-epoxy-(5Z,8Z,11Z)-eicosatrienoyl-CoA + AMP + diphosphate. The catalysed reaction is 11,12-epoxy-(5Z,8Z,14Z)-eicosatrienoate + ATP + CoA = 11,12-epoxy-(5Z,8Z,14Z)-eicosatrienoyl-CoA + AMP + diphosphate. The enzyme catalyses 8,9-epoxy-(5Z,11Z,14Z)-eicosatrienoate + ATP + CoA = 8,9-epoxy-(5Z,11Z,14Z)-eicosatrienoyl-CoA + AMP + diphosphate. It catalyses the reaction hexadecanoate + ATP + CoA = hexadecanoyl-CoA + AMP + diphosphate. It carries out the reaction (E)-hexadec-2-enoate + ATP + CoA = (2E)-hexadecenoyl-CoA + AMP + diphosphate. With respect to regulation, both triacsin C and rosiglitazone inhibit arachidonoyl-CoA ligase activity. Its function is as follows. Catalyzes the conversion of long-chain fatty acids to their active form acyl-CoA for both synthesis of cellular lipids, and degradation via beta-oxidation. Preferentially activates arachidonate and eicosapentaenoate as substrates. Preferentially activates 8,9-EET &gt; 14,15-EET &gt; 5,6-EET &gt; 11,12-EET. Modulates glucose-stimulated insulin secretion by regulating the levels of unesterified EETs. Modulates prostaglandin E2 secretion. The chain is Long-chain-fatty-acid--CoA ligase 4 (Acsl4) from Mus musculus (Mouse).